Here is a 633-residue protein sequence, read N- to C-terminus: FAD-binding monooxygenase andJ (633 aa).

FAD contacts are provided by residues 117-120 (TWYW), 129-130 (DT), and tyrosine 135. 127-129 (MCD) contributes to the NADP(+) binding site. Residues 269–275 (TGASAVQ) and 292–293 (RT) contribute to the NADP(+) site.

This sequence belongs to the FAD-binding monooxygenase family. FAD serves as cofactor.

Its pathway is secondary metabolite biosynthesis; terpenoid biosynthesis. Functionally, FAD-binding monooxygenase; part of the gene cluster that mediates the biosynthesis of anditomin, a fungal meroterpenoid. The first step of the pathway is the synthesis of 3,5-dimethylorsellinic acid (DMOA) by the polyketide synthase andM. DMOA is then converted to the phthalide compound 5,7-dihydroxy-4,6-dimethylphthalide (DHDMP) by the cytochrome P450 monooxygenase andK, which is further prenylated by the prenyltransferase andD to yield farnesyl-DHDMP. Further epoxidation by the FAD-dependent monooxygenase andE leads to epoxyfarnesyl-DHDMP. The next step involves the terpene cyclase andB that converts epoxyfarnesyl-DHDMP into preandiloid A through opening of the epoxide ring followed by the cyclization of the farnesyl moiety. Preandiloid A is in turn oxidized at the C-3 hydroxyl group to yield preandiloid B by the dehydrogenase andC. The dioxygenase andA is solely responsible for the dehydrogenation of preandiloid B leading to the enone preandiloid C, as well as for the intriguing structural rearrangement to generate the bicyclo[2.2.2]octane core, transforming preandiloid C into andiconin. FAD-binding monooxygenase andJ then produces andilesin D which is reduced by dehydrogenase andI to yield andilesin A. Action of acetyltransferase andG followed by a spontaneous acetate elimination leads then to andilesin B, which is in turn substrate of the short chain dehydrogenase andH to yield andilesin C. Finally, the dioxygenase andF catalyzes the transformation of andilesin C to anditomin. The protein is FAD-binding monooxygenase andJ of Emericella variicolor (Aspergillus stellatus).